The following is a 102-amino-acid chain: Type IV secretion system protein PtlA homolog (102 aa).

An N-terminal signal peptide occupies residues 1-31; that stretch reads MNRLKDLGTPRPRLAFMAACILLLATLPDFA. 2 consecutive transmembrane segments (helical) span residues 45 to 65 and 77 to 97; these read AGIV…AIIW and VLDV…AEIA.

Belongs to the PtlA family.

It localises to the cell membrane. The polypeptide is Type IV secretion system protein PtlA homolog (ptlA) (Bordetella bronchiseptica (strain ATCC BAA-588 / NCTC 13252 / RB50) (Alcaligenes bronchisepticus)).